Here is a 1280-residue protein sequence, read N- to C-terminus: Clustered mitochondria protein homolog (1280 aa).

Over residues 1-27 (MAASSNDASKSAMANSNVTTEVAQTPS) the composition is skewed to polar residues. 2 disordered regions span residues 1–49 (MAAS…GQLP) and 169–189 (GLDQ…LADY). Residues 32-43 (VNGEVEATEEDG) are compositionally biased toward acidic residues. The 245-residue stretch at 338–582 (DLARTQESYL…RLTPLDVAWI (245 aa)) folds into the Clu domain. 3 disordered regions span residues 633–669 (KANK…EPEQ), 905–943 (GAAV…AVSL), and 1214–1280 (TGRN…TQKP). Positions 635–648 (NKARGGRRRLPKAQ) are enriched in basic residues. The span at 649 to 669 (KKADAGKEVDGEKKAEAEPEQ) shows a compositional bias: basic and acidic residues. A compositionally biased stretch (low complexity) spans 1221–1235 (PAAATPSVSDAAAAA). Residues 1245–1261 (VDQRKIEDLLKYIEGES) are compositionally biased toward basic and acidic residues. Residues 1265 to 1280 (PTKKRTQNPRKRTQKP) show a composition bias toward basic residues.

The protein belongs to the CLU family. As to quaternary structure, may associate with the eukaryotic translation initiation factor 3 (eIF-3) complex.

The protein resides in the cytoplasm. Its function is as follows. mRNA-binding protein involved in proper cytoplasmic distribution of mitochondria. This chain is Clustered mitochondria protein homolog, found in Phaeosphaeria nodorum (strain SN15 / ATCC MYA-4574 / FGSC 10173) (Glume blotch fungus).